Consider the following 292-residue polypeptide: uncharacterized protein (292 aa).

The first 19 residues, 1 to 19 (MFKKYIFILLLLVTSIVKA), serve as a signal peptide directing secretion. Residues 271–292 (KRNNPPLKTNNAKSKNPYDQSK) are disordered.

This is an uncharacterized protein from Rickettsia bellii (strain RML369-C).